A 92-amino-acid chain; its full sequence is Acyl-CoA-binding protein (92 aa).

The 86-residue stretch at L3–S88 folds into the ACB domain. An acyl-CoA contacts are provided by residues Y30–K34, K56, and Y75.

The protein belongs to the ACBP family.

Functionally, binds medium- and long-chain acyl-CoA esters with very high affinity and may function as an intracellular carrier of acyl-CoA esters. The sequence is that of Acyl-CoA-binding protein from Brassica napus (Rape).